Here is an 883-residue protein sequence, read N- to C-terminus: Phosphoenolpyruvate carboxylase (883 aa).

Catalysis depends on residues His-138 and Lys-546.

It belongs to the PEPCase type 1 family. In terms of assembly, homotetramer. Mg(2+) serves as cofactor.

The enzyme catalyses oxaloacetate + phosphate = phosphoenolpyruvate + hydrogencarbonate. The enzyme has distinct binding sites for each of the allosteric effectors such as acetyl-CoA, fructose 1,6-bisphosphate, guanosine 3'-diphosphate 5'-diphosphate, long chain fatty acids, and L-aspartate. Functionally, forms oxaloacetate, a four-carbon dicarboxylic acid source for the tricarboxylic acid cycle. This chain is Phosphoenolpyruvate carboxylase (ppc), found in Salmonella typhi.